A 394-amino-acid chain; its full sequence is Probable fatty acyl-CoA transferase Rv3272 (394 aa).

Aspartate 175 functions as the Nucleophile in the catalytic mechanism.

Belongs to the CoA-transferase III family. As to quaternary structure, homodimer.

Functionally, probably involved in fatty acid metabolism. Binds to fatty acyl-CoAs of varying carbon chain lengths, with the highest binding affinity for palmitoyl-CoA (C16:0). In vitro, alters the cell wall lipid profile and protects mycobacteria from acidic, oxidative and antibiotic stress. May play a significant role in host-pathogen interaction. The polypeptide is Probable fatty acyl-CoA transferase Rv3272 (Mycobacterium tuberculosis (strain ATCC 25618 / H37Rv)).